The primary structure comprises 333 residues: Sphingomyelinase C (333 aa).

Positions 1–27 (MKGKLLKGVLSLGVGLGALYSGTSAQA) are cleaved as a signal peptide. A disulfide bridge links Cys-150 with Cys-186.

It belongs to the neutral sphingomyelinase family. Mg(2+) is required as a cofactor.

The protein localises to the secreted. It carries out the reaction a sphingomyelin + H2O = phosphocholine + an N-acylsphing-4-enine + H(+). Activated by cobalt and manganese ions. In terms of biological role, required, with sphingomyelinase, to effect target cell lysis (hemolysis). This is Sphingomyelinase C (sph) from Bacillus cereus.